Reading from the N-terminus, the 100-residue chain is Large ribosomal subunit protein uL23 (100 aa).

It belongs to the universal ribosomal protein uL23 family. In terms of assembly, part of the 50S ribosomal subunit. Contacts protein L29, and trigger factor when it is bound to the ribosome.

One of the early assembly proteins it binds 23S rRNA. One of the proteins that surrounds the polypeptide exit tunnel on the outside of the ribosome. Forms the main docking site for trigger factor binding to the ribosome. The chain is Large ribosomal subunit protein uL23 from Acaryochloris marina (strain MBIC 11017).